The sequence spans 72 residues: DNA-directed RNA polymerase subunit omega (72 aa).

This sequence belongs to the RNA polymerase subunit omega family. As to quaternary structure, the RNAP catalytic core consists of 2 alpha, 1 beta, 1 beta' and 1 omega subunit. When a sigma factor is associated with the core the holoenzyme is formed, which can initiate transcription.

The catalysed reaction is RNA(n) + a ribonucleoside 5'-triphosphate = RNA(n+1) + diphosphate. Its function is as follows. Promotes RNA polymerase assembly. Latches the N- and C-terminal regions of the beta' subunit thereby facilitating its interaction with the beta and alpha subunits. The sequence is that of DNA-directed RNA polymerase subunit omega from Clostridium acetobutylicum (strain ATCC 824 / DSM 792 / JCM 1419 / IAM 19013 / LMG 5710 / NBRC 13948 / NRRL B-527 / VKM B-1787 / 2291 / W).